The following is a 251-amino-acid chain: Phosphate import ATP-binding protein PstB 2 (251 aa).

The ABC transporter domain maps to 5–246 (ISAKDVHLSY…PKKQITSDYL (242 aa)). ATP is bound at residue 37–44 (GPSGCGKS).

This sequence belongs to the ABC transporter superfamily. Phosphate importer (TC 3.A.1.7) family. The complex is composed of two ATP-binding proteins (PstB), two transmembrane proteins (PstC and PstA) and a solute-binding protein (PstS).

It localises to the cell membrane. The catalysed reaction is phosphate(out) + ATP + H2O = ADP + 2 phosphate(in) + H(+). Part of the ABC transporter complex PstSACB involved in phosphate import. Responsible for energy coupling to the transport system. In Lactobacillus acidophilus (strain ATCC 700396 / NCK56 / N2 / NCFM), this protein is Phosphate import ATP-binding protein PstB 2.